The sequence spans 97 residues: Small ribosomal subunit protein uS17 (97 aa).

The disordered stretch occupies residues Met1–Lys20.

The protein belongs to the universal ribosomal protein uS17 family. Part of the 30S ribosomal subunit.

Functionally, one of the primary rRNA binding proteins, it binds specifically to the 5'-end of 16S ribosomal RNA. The protein is Small ribosomal subunit protein uS17 of Corynebacterium jeikeium (strain K411).